Reading from the N-terminus, the 215-residue chain is 3-demethoxyubiquinol 3-hydroxylase (215 aa).

Residues 26–47 (PSSAHSQRPSPAVVQPEHKMSE) form a disordered region. 6 residues coordinate Fe cation: Glu-64, Glu-94, His-97, Glu-146, Glu-178, and His-181.

It belongs to the COQ7 family. It depends on Fe cation as a cofactor.

The protein localises to the cell membrane. The catalysed reaction is a 5-methoxy-2-methyl-3-(all-trans-polyprenyl)benzene-1,4-diol + AH2 + O2 = a 3-demethylubiquinol + A + H2O. It functions in the pathway cofactor biosynthesis; ubiquinone biosynthesis. Catalyzes the hydroxylation of 2-nonaprenyl-3-methyl-6-methoxy-1,4-benzoquinol during ubiquinone biosynthesis. The sequence is that of 3-demethoxyubiquinol 3-hydroxylase from Pseudomonas syringae pv. syringae (strain B728a).